A 235-amino-acid chain; its full sequence is Derlin-3 (235 aa).

Residues 1–22 lie on the Cytoplasmic side of the membrane; the sequence is MAWQGLAAEFLQVPAVTRAYTA. A helical membrane pass occupies residues 23–43; sequence ACVLTTAAVQLELLSPFQLYF. The Lumenal segment spans residues 44-58; the sequence is NPHLVFRKFQVWRLV. A helical membrane pass occupies residues 59–79; the sequence is TNFLFFGPLGFSFFFNMLFVF. Over 80 to 98 the chain is Cytoplasmic; that stretch reads RYCRMLEEGSFRGRTADFV. A helical transmembrane segment spans residues 99 to 119; sequence FMFLFGGVLMTLLGLLGSLFF. Topologically, residues 120–157 are lumenal; it reads LGQALMAMLVYVWSRRSPRVRVNFFGLLTFQAPFLPWA. The chain crosses the membrane as a helical span at residues 158-178; that stretch reads LMGFSLLLGNSILVDLLGIAV. The Cytoplasmic segment spans residues 179–235; that stretch reads GHIYYFLEDVFPNQPGGKRLLQTPGFLKLLLDAPAEDPNYLPLPEEQPGPHLPPPQQ. The tract at residues 216-235 is disordered; it reads PNYLPLPEEQPGPHLPPPQQ. Residues 223 to 235 are compositionally biased toward pro residues; it reads EEQPGPHLPPPQQ.

It belongs to the derlin family. In terms of assembly, forms homo- and heterooligomers with DERL2 and, to a lesser extent, with DERL1. Interacts with VCP and EDEM1. Interacts with SELENOK and SELENOS. Interacts with the signal recognition particle/SRP and the SRP receptor; in the process of endoplasmic reticulum stress-induced pre-emptive quality control. In terms of tissue distribution, unlike DERL1 and DERL2, restricted to several tissues. Expressed at high levels in placenta, pancreas, spleen and small intestine.

The protein localises to the endoplasmic reticulum membrane. Its function is as follows. Functional component of endoplasmic reticulum-associated degradation (ERAD) for misfolded lumenal glycoproteins, but not that of misfolded nonglycoproteins. May act by forming a channel that allows the retrotranslocation of misfolded glycoproteins into the cytosol where they are ubiquitinated and degraded by the proteasome. May mediate the interaction between VCP and the misfolded glycoproteins. May be involved in endoplasmic reticulum stress-induced pre-emptive quality control, a mechanism that selectively attenuates the translocation of newly synthesized proteins into the endoplasmic reticulum and reroutes them to the cytosol for proteasomal degradation. This chain is Derlin-3, found in Homo sapiens (Human).